The chain runs to 421 residues: Outer capsid protein P8 (421 aa).

It belongs to the phytoreovirus outer capsid protein P8 family. Homotrimer. Homomultimer. Interacts with host peroxisomal glycolate oxidase (GOX). This interaction mediates its relocation to virus factories peripheral to host peroxisomes.

It localises to the virion. It is found in the host cytoplasm. Capsid protein which self-assembles to form the outer icosahedral capsid with a T=13 symmetry, about 70 nm in diameter and consisting of 780 molecules capsid proteins. This Rice dwarf virus (isolate S) (RDV) protein is Outer capsid protein P8 (S8).